Reading from the N-terminus, the 357-residue chain is Protein RecA (357 aa).

ATP is bound at residue 79-86; the sequence is GPESSGKT.

The protein belongs to the RecA family.

It localises to the cytoplasm. Can catalyze the hydrolysis of ATP in the presence of single-stranded DNA, the ATP-dependent uptake of single-stranded DNA by duplex DNA, and the ATP-dependent hybridization of homologous single-stranded DNAs. It interacts with LexA causing its activation and leading to its autocatalytic cleavage. The chain is Protein RecA from Chloroherpeton thalassium (strain ATCC 35110 / GB-78).